Reading from the N-terminus, the 98-residue chain is NADH-ubiquinone oxidoreductase chain 4L (98 aa).

Helical transmembrane passes span 1–21 (MPYI…GMLI), 29–49 (SLLC…LTIL), and 61–81 (IILL…LVMV).

It belongs to the complex I subunit 4L family. In terms of assembly, core subunit of respiratory chain NADH dehydrogenase (Complex I) which is composed of 45 different subunits.

It is found in the mitochondrion inner membrane. It carries out the reaction a ubiquinone + NADH + 5 H(+)(in) = a ubiquinol + NAD(+) + 4 H(+)(out). Core subunit of the mitochondrial membrane respiratory chain NADH dehydrogenase (Complex I) which catalyzes electron transfer from NADH through the respiratory chain, using ubiquinone as an electron acceptor. Part of the enzyme membrane arm which is embedded in the lipid bilayer and involved in proton translocation. The polypeptide is NADH-ubiquinone oxidoreductase chain 4L (MT-ND4L) (Cephalopachus bancanus (Western tarsier)).